We begin with the raw amino-acid sequence, 508 residues long: 25-hydroxyvitamin D-1 alpha hydroxylase, mitochondrial (508 aa).

Cys-455 is a binding site for heme.

It belongs to the cytochrome P450 family. It depends on heme as a cofactor. In terms of tissue distribution, kidney.

The protein localises to the mitochondrion membrane. The enzyme catalyses calcidiol + 2 reduced [adrenodoxin] + O2 + 2 H(+) = calcitriol + 2 oxidized [adrenodoxin] + H2O. It catalyses the reaction secalciferol + 2 reduced [adrenodoxin] + O2 + 2 H(+) = calcitetrol + 2 oxidized [adrenodoxin] + H2O. It carries out the reaction 25-hydroxy-24-oxocalciol + 2 reduced [adrenodoxin] + O2 + 2 H(+) = (1S)-1,25-dihydroxy-24-oxocalciol + 2 oxidized [adrenodoxin] + H2O. The catalysed reaction is 25-hydroxyvitamin D2 + 2 reduced [adrenodoxin] + O2 + 2 H(+) = 1alpha,25-dihydroxyvitamin D2 + 2 oxidized [adrenodoxin] + H2O. It functions in the pathway hormone biosynthesis; vitamin D biosynthesis. Activated by cardiolipin and dioleoyl phosphatidylethanolamine (DOPE), phospholipids found in the inner mitochondrial membrane. Inhibited by high substrate concentration. A cytochrome P450 monooxygenase involved in vitamin D metabolism and in calcium and phosphorus homeostasis. Catalyzes the rate-limiting step in the activation of vitamin D in the kidney, namely the hydroxylation of 25-hydroxyvitamin D3/calcidiol at the C1alpha-position to form the hormonally active form of vitamin D3, 1alpha,25-dihydroxyvitamin D3/calcitriol that acts via the vitamin D receptor (VDR). Has 1alpha-hydroxylase activity on vitamin D intermediates of the CYP24A1-mediated inactivation pathway. Converts 24R,25-dihydroxyvitamin D3/secalciferol to 1-alpha,24,25-trihydroxyvitamin D3, an active ligand of VDR. Also active on 25-hydroxyvitamin D2. Mechanistically, uses molecular oxygen inserting one oxygen atom into a substrate, and reducing the second into a water molecule, with two electrons provided by NADPH via FDXR/adrenodoxin reductase and FDX1/adrenodoxin. In Homo sapiens (Human), this protein is 25-hydroxyvitamin D-1 alpha hydroxylase, mitochondrial (CYP27B1).